Consider the following 124-residue polypeptide: Ribonuclease pancreatic (124 aa).

Over residues 1 to 13 (SETAAEKFERQHM) the composition is skewed to basic and acidic residues. Residues 1-23 (SETAAEKFERQHMDSYSSSSSNS) form a disordered region. Lysine 7 and arginine 10 together coordinate substrate. The Proton acceptor role is filled by histidine 12. Intrachain disulfides connect cysteine 26-cysteine 84, cysteine 40-cysteine 95, cysteine 58-cysteine 110, and cysteine 65-cysteine 72. Substrate is bound by residues 41–45 (KPVNT), lysine 66, and arginine 85. Histidine 119 functions as the Proton donor in the catalytic mechanism.

Belongs to the pancreatic ribonuclease family. In terms of assembly, monomer. Interacts with and forms tight 1:1 complexes with RNH1. Dimerization of two such complexes may occur. Interaction with RNH1 inhibits this protein. In terms of tissue distribution, pancreas.

The protein resides in the secreted. It catalyses the reaction an [RNA] containing cytidine + H2O = an [RNA]-3'-cytidine-3'-phosphate + a 5'-hydroxy-ribonucleotide-3'-[RNA].. It carries out the reaction an [RNA] containing uridine + H2O = an [RNA]-3'-uridine-3'-phosphate + a 5'-hydroxy-ribonucleotide-3'-[RNA].. Endonuclease that catalyzes the cleavage of RNA on the 3' side of pyrimidine nucleotides. Acts on single-stranded and double-stranded RNA. In Camelus dromedarius (Dromedary), this protein is Ribonuclease pancreatic (RNASE1).